The following is a 512-amino-acid chain: Reduced folate transporter (512 aa).

Methionine 1 carries the post-translational modification N-acetylmethionine. Over 1–29 (MVPTGQVAEKQAYEEPRQDHELKSWRCLV) the chain is Cytoplasmic. A helical transmembrane segment spans residues 30–50 (FYLCFFGFMAQLRPGESFITP). Positions 48 and 49 each coordinate folate. Topologically, residues 51–62 (FLLERKFTKEQV) are extracellular. A helical membrane pass occupies residues 63–85 (TNEIIPMLPYSHLAVLVPVFLLT). The Cytoplasmic portion of the chain corresponds to 86-89 (DYLR). Residues 90–110 (YKPVLVLQCLSFVCVWLLLLL) form a helical membrane-spanning segment. The Extracellular segment spans residues 111 to 114 (GTSV). The helical transmembrane segment at 115–137 (VHMQLMEVFYSVTMAARIAYSSY) threads the bilayer. Residues glutamate 121 and arginine 131 each coordinate folate. The Cytoplasmic portion of the chain corresponds to 138–151 (IFSLVHPSRYQRMA). Residues 152 to 176 (SYSRAAVLLGVFISSVLGQALVTVG) form a helical membrane-spanning segment. Position 162 (valine 162) interacts with folate. At 177-181 (HISTY) the chain is on the extracellular side. The chain crosses the membrane as a helical span at residues 182–200 (TLNCVSLGFILFSLVLSLF). At 201–266 (LKRPKRSLFF…ELVENARQPQ (66 aa)) the chain is on the cytoplasmic side. The chain crosses the membrane as a helical span at residues 267–292 (LRLWCLWWVFNSSGYYLITYYVHVLW). The folate site is built by tyrosine 281, tyrosine 282, and tyrosine 286. Residues 293–300 (RSTDSSLS) are Extracellular-facing. Residues 301–323 (YNGAVDAASTLLSAITSFSAGFL) form a helical membrane-spanning segment. Topologically, residues 324–329 (SIRWTL) are cytoplasmic. Residues 330–350 (WSKLVIAGVIAIQASLVFCMF) traverse the membrane as a helical segment. Over 351 to 353 (QIR) the chain is Extracellular. A helical transmembrane segment spans residues 354-377 (DIWVCYVTFVLFRGAYQFLVPIAT). Folate-binding residues include arginine 366 and glutamine 370. The Cytoplasmic portion of the chain corresponds to 378–391 (FQIASSLSKELCAL). Residues 392–415 (VFGINTFLATALKTCITLVVSDKR) form a helical membrane-spanning segment. Residues 400–412 (ATALKTCITLVVS) form a required for substrate-binding region. The Extracellular segment spans residues 416–423 (GLGLQVRD). The helical transmembrane segment at 424-448 (QFRIYFIYFLMLSITCFAWAGLDGL) threads the bilayer. Residues 449–512 (RYCQRGRHQP…RGDLRVEAKA (64 aa)) lie on the Cytoplasmic side of the membrane. 3 positions are modified to phosphoserine: serine 467, serine 472, and serine 477. The disordered stretch occupies residues 478–512 (LQDGDLRGPQPSAPQLLSEDGMEDDRGDLRVEAKA).

This sequence belongs to the reduced folate carrier (RFC) transporter (TC 2.A.48) family.

It is found in the cell membrane. The protein resides in the apical cell membrane. The protein localises to the basolateral cell membrane. It catalyses the reaction 5-amino-1-(5-phospho-beta-D-ribosyl)imidazole-4-carboxamide(in) + (6S)-5-methyl-5,6,7,8-tetrahydrofolate(out) = 5-amino-1-(5-phospho-beta-D-ribosyl)imidazole-4-carboxamide(out) + (6S)-5-methyl-5,6,7,8-tetrahydrofolate(in). In terms of biological role, antiporter that mediates the import of reduced folates, driven by the export of organic anions. Also acts as an importer of immunoreactive cyclic dinucleotides, but with a lower transporter activity. Mechanistically, acts as a secondary active transporter, which exports intracellular organic anions down their concentration gradients to facilitate the uptake of its substrates. Has high affinity for N5-methyltetrahydrofolate, the predominant circulating form of folate. Also mediates the import of antifolate drug methotrexate. 5-amino-4-imidazolecarboxamide riboside (AICAR), when phosphorylated to AICAR monophosphate, can serve as an organic anion for antiporter activity. The polypeptide is Reduced folate transporter (Mus musculus (Mouse)).